Reading from the N-terminus, the 156-residue chain is ATP synthase subunit b (156 aa).

The chain crosses the membrane as a helical span at residues 7-29 (LIGQLIAFALFTWFCVKFVWPPI).

The protein belongs to the ATPase B chain family. F-type ATPases have 2 components, F(1) - the catalytic core - and F(0) - the membrane proton channel. F(1) has five subunits: alpha(3), beta(3), gamma(1), delta(1), epsilon(1). F(0) has three main subunits: a(1), b(2) and c(10-14). The alpha and beta chains form an alternating ring which encloses part of the gamma chain. F(1) is attached to F(0) by a central stalk formed by the gamma and epsilon chains, while a peripheral stalk is formed by the delta and b chains.

The protein localises to the cell inner membrane. Its function is as follows. F(1)F(0) ATP synthase produces ATP from ADP in the presence of a proton or sodium gradient. F-type ATPases consist of two structural domains, F(1) containing the extramembraneous catalytic core and F(0) containing the membrane proton channel, linked together by a central stalk and a peripheral stalk. During catalysis, ATP synthesis in the catalytic domain of F(1) is coupled via a rotary mechanism of the central stalk subunits to proton translocation. Functionally, component of the F(0) channel, it forms part of the peripheral stalk, linking F(1) to F(0). This chain is ATP synthase subunit b, found in Mannheimia succiniciproducens (strain KCTC 0769BP / MBEL55E).